A 166-amino-acid chain; its full sequence is NAD(P)H-quinone oxidoreductase subunit I, chloroplastic (166 aa).

4Fe-4S ferredoxin-type domains follow at residues 55–84 and 95–124; these read GRIH…VDWK and LNYS…MTEE. [4Fe-4S] cluster-binding residues include C64, C67, C70, C74, C104, C107, C110, and C114.

This sequence belongs to the complex I 23 kDa subunit family. In terms of assembly, NDH is composed of at least 16 different subunits, 5 of which are encoded in the nucleus. The cofactor is [4Fe-4S] cluster.

The protein resides in the plastid. It localises to the chloroplast thylakoid membrane. The enzyme catalyses a plastoquinone + NADH + (n+1) H(+)(in) = a plastoquinol + NAD(+) + n H(+)(out). It carries out the reaction a plastoquinone + NADPH + (n+1) H(+)(in) = a plastoquinol + NADP(+) + n H(+)(out). NDH shuttles electrons from NAD(P)H:plastoquinone, via FMN and iron-sulfur (Fe-S) centers, to quinones in the photosynthetic chain and possibly in a chloroplast respiratory chain. The immediate electron acceptor for the enzyme in this species is believed to be plastoquinone. Couples the redox reaction to proton translocation, and thus conserves the redox energy in a proton gradient. The polypeptide is NAD(P)H-quinone oxidoreductase subunit I, chloroplastic (Laphamia lindheimeri (Lindheimer's rockdaisy)).